Here is a 460-residue protein sequence, read N- to C-terminus: MGKEDKTHINVVVIGHVDSGKSTTTGHLIYKCGGIDKRTIEKFEKEAAELGKGSFKYAWVLDKLKAERERGITIDIALWKFETPKYYVTVIDAPGHRDFIKNMITGTSQADCAILIIAAGTGEFEAGISKDGQTREHALLAYTLGVKQLIVAINKMDTTQWSQTRFEEIIKETKNFIKKVGYNPAGVAFVPISGFNGDNMLEPSTNCPWYKGWEKETKAGKATGKTLLEAIDAIEPPKRPTDKPLRLPLQDVYKIGGIGTVPVGRIETGVLKPGMVVTFAPSNVTTEVKSVEMHHEQLAQGVPGDNVGFNVKNVSVKDIRRGNVAGDSKNDPPAGAASFTAQVIVLNHPGQVGAGYAPVLDCHTAHIACKFAELLEKIDRRTGKAVEASPKFIKSGDAAIVKMIPSKPMCVEAFTDYPPLGRFAVRDMRQTVAVGVIKAVDKSTAAAGKVTKSAAKAAKK.

At glycine 2 the chain carries N,N,N-trimethylglycine. Lysine 3 bears the N6,N6-dimethyllysine; alternate mark. N6-methyllysine; alternate is present on lysine 3. The tr-type G domain occupies 6-241 (KTHINVVVIG…DAIEPPKRPT (236 aa)). Residues 15–22 (GHVDSGKS) form a G1 region. Residue 15–22 (GHVDSGKS) participates in GTP binding. The residue at position 31 (lysine 31) is an N6-methyllysine. The interval 71–75 (GITID) is G2. N6,N6,N6-trimethyllysine is present on lysine 80. The tract at residues 92-95 (DAPG) is G3. GTP contacts are provided by residues 92 to 96 (DAPGH) and 154 to 157 (NKMD). Residues 154–157 (NKMD) form a G4 region. The G5 stretch occupies residues 193–195 (SGF). Lysine 317 carries the post-translational modification N6,N6-dimethyllysine; alternate. Lysine 317 carries the post-translational modification N6-methyllysine; alternate. The residue at position 391 (lysine 391) is an N6-methyllysine.

This sequence belongs to the TRAFAC class translation factor GTPase superfamily. Classic translation factor GTPase family. EF-Tu/EF-1A subfamily.

The protein localises to the cytoplasm. Its function is as follows. This protein promotes the GTP-dependent binding of aminoacyl-tRNA to the A-site of ribosomes during protein biosynthesis. This Neurospora crassa (strain ATCC 24698 / 74-OR23-1A / CBS 708.71 / DSM 1257 / FGSC 987) protein is Elongation factor 1-alpha (tef-1).